Here is a 286-residue protein sequence, read N- to C-terminus: 4-hydroxybenzoate octaprenyltransferase (286 aa).

The next 7 membrane-spanning stretches (helical) occupy residues 21-40 (GTLL…AGGM), 95-115 (ILFV…NGLV), 142-162 (FLGI…TGEV), 167-187 (WWLF…YAMV), 210-230 (QIIG…GWSA), 235-255 (LYGL…MLIF), and 266-286 (FLNN…DYLI).

It belongs to the UbiA prenyltransferase family. Mg(2+) is required as a cofactor.

The protein localises to the cell inner membrane. It carries out the reaction all-trans-octaprenyl diphosphate + 4-hydroxybenzoate = 4-hydroxy-3-(all-trans-octaprenyl)benzoate + diphosphate. It participates in cofactor biosynthesis; ubiquinone biosynthesis. Its function is as follows. Catalyzes the prenylation of para-hydroxybenzoate (PHB) with an all-trans polyprenyl group. Mediates the second step in the final reaction sequence of ubiquinone-8 (UQ-8) biosynthesis, which is the condensation of the polyisoprenoid side chain with PHB, generating the first membrane-bound Q intermediate 3-octaprenyl-4-hydroxybenzoate. This is 4-hydroxybenzoate octaprenyltransferase from Shewanella baltica (strain OS223).